The primary structure comprises 987 residues: Mitotic checkpoint serine/threonine-protein kinase bub-1 (987 aa).

Disordered regions lie at residues 278–385 (RRRH…TSKS) and 574–599 (LAAN…KDSS). The segment covering 350–364 (ERLKIMTAGRKDGNP) has biased composition (basic and acidic residues). Low complexity predominate over residues 368-380 (STSISSNYSTASA). Over residues 575-587 (AANQAVQPSVTES) the composition is skewed to polar residues. The span at 588 to 599 (SKPERSDPKDSS) shows a compositional bias: basic and acidic residues. A Protein kinase domain is found at 690 to 987 (LHIQTLIGQG…EACDLAANQK (298 aa)). ATP contacts are provided by residues 696–704 (IGQGGYAKV) and Lys718. The active-site Proton acceptor is Asp814.

It belongs to the protein kinase superfamily. Ser/Thr protein kinase family. BUB1 subfamily. Interacts (via kinase domain) with mdf-1 (via coiled coil domain); the interaction recruits mdf-1 to unattached kinetochores during mitosis and between homologous chromosomes in early anaphase of meiosis I. May interact with bub-3; for localization at the kinetochore and the onset of anaphase.

Its subcellular location is the cytoplasm. The protein localises to the cell cortex. The protein resides in the nucleus. It localises to the chromosome. It is found in the centromere. Its subcellular location is the kinetochore. The catalysed reaction is L-seryl-[protein] + ATP = O-phospho-L-seryl-[protein] + ADP + H(+). The enzyme catalyses L-threonyl-[protein] + ATP = O-phospho-L-threonyl-[protein] + ADP + H(+). In terms of biological role, serine/threonine-protein kinase essential for spindle-assembly checkpoint signaling. Plays a key role in the recruitment of the checkpoint proteins bub-3, mdf-1 and mdf-2 to unattached kinetochores. mdf-1 recruitment is independent of bub-1 kinase activity. Has a role in the correct kinetochore localization of the spindly-like protein spdl-1. In addition, during meiotic anaphase I, controls the recruitment of hcp-1/2 and klp-19 to the ring-shaped domain formed between chromosomes. Involved in chromosome alignment, chromosome homolog segregation and spindle assembly. In association with bub-3 at the kinetochore region of chromosomes, promotes the onset on anaphase independently from spindle checkpoint signaling and promotes the formation of stable end-on bipolar attachments of chromosomes. Plays a role in nuclear envelope breakdown. Required maternally during embryogenesis and in the zygote for the postembryonic development of several tissues including ventral cord neurons, gonad, intestine and seam cells. This chain is Mitotic checkpoint serine/threonine-protein kinase bub-1, found in Caenorhabditis elegans.